The chain runs to 420 residues: Reticulon-4 receptor-like 2 (420 aa).

The N-terminal stretch at 1–30 is a signal peptide; it reads MLPGLRRLLQGPASACLLLTLLALPPVTPS. 2 disulfides stabilise this stretch: Cys-31-Cys-37 and Cys-35-Cys-46. Residues 31 to 60 form the LRRNT domain; sequence CPMLCTCYSSPPTVSCQANNFSSVPLSLPP. Asn-50 carries an N-linked (GlcNAc...) asparagine glycan. 8 LRR repeats span residues 61-82, 83-104, 107-129, 132-153, 156-177, 180-201, 204-225, and 228-249; these read STQR…TFGP, NLLT…TFRH, ALEE…TFQG, RLQS…IFRG, SLQY…LFAD, NLSH…VFRG, SLDR…AFHG, and RLTI…ALAD. Residue Asn-93 is glycosylated (N-linked (GlcNAc...) asparagine). Asn-236 carries N-linked (GlcNAc...) asparagine glycosylation. The LRRCT domain occupies 261 to 312; the sequence is NPWACDCRARPLWAWFQRARVSSSDVTCATPPERQGRDLRTLRDTDFQACPP. 2 cysteine pairs are disulfide-bonded: Cys-265–Cys-288 and Cys-267–Cys-310. The segment at 286–390 is disordered; that stretch reads VTCATPPERQ…GEQTCPGAAC (105 aa). Basic and acidic residues predominate over residues 294–306; it reads RQGRDLRTLRDTD. The important for interaction with MAG stretch occupies residues 315–327; the sequence is PTRPGSRARGNSS. A compositionally biased stretch (basic and acidic residues) spans 351-360; sequence LPAEDSRGRQ. Cys-390 carries the GPI-anchor amidated cysteine lipid modification. A propeptide spans 391–420 (removed in mature form); it reads QAPADSRGPVLSAGLRTPLLCLLLLAPHHL.

This sequence belongs to the Nogo receptor family. In terms of assembly, interaction with MAG is controversial, and may be indirect. Interacts with MAG. Does not interact with OMG and RTN4. Undergoes zinc metalloproteinase-mediated ectodomain shedding in neuroblastoma cells; is released both as a full-length ectodomain and an N-terminal fragment containing the leucine-rich repeat (LRR) region of the protein. In terms of processing, N-glycosylated. O-glycosylated. Contains terminal sialic acid groups on its glycan chains. Detected in adult brain, in neocortex, hippocampus, striatum and dorsal root ganglion neurons, and in retina (at protein level). In brain, detected in cerebral cortex and hippocampus. Weak or no expression detected in the cerebellum, thalamus or striatum.

The protein resides in the cell membrane. The protein localises to the cell projection. It is found in the dendrite. Its subcellular location is the perikaryon. It localises to the axon. The protein resides in the membrane raft. In terms of biological role, cell surface receptor that plays a functionally redundant role in the inhibition of neurite outgrowth mediated by MAG. Plays a functionally redundant role in postnatal brain development. Contributes to normal axon migration across the brain midline and normal formation of the corpus callosum. Does not seem to play a significant role in regulating axon regeneration in the adult central nervous system. Protects motoneurons against apoptosis; protection against apoptosis is probably mediated by MAG. Like other family members, plays a role in restricting the number dendritic spines and the number of synapses that are formed during brain development. Signaling mediates activation of Rho and downstream reorganization of the actin cytoskeleton. In Rattus norvegicus (Rat), this protein is Reticulon-4 receptor-like 2.